Reading from the N-terminus, the 1342-residue chain is DNA-directed RNA polymerase subunit beta (1342 aa).

Belongs to the RNA polymerase beta chain family. As to quaternary structure, the RNAP catalytic core consists of 2 alpha, 1 beta, 1 beta' and 1 omega subunit. When a sigma factor is associated with the core the holoenzyme is formed, which can initiate transcription.

It carries out the reaction RNA(n) + a ribonucleoside 5'-triphosphate = RNA(n+1) + diphosphate. Functionally, DNA-dependent RNA polymerase catalyzes the transcription of DNA into RNA using the four ribonucleoside triphosphates as substrates. This Buchnera aphidicola subsp. Schizaphis graminum (strain Sg) protein is DNA-directed RNA polymerase subunit beta.